The chain runs to 68 residues: Guanine nucleotide-binding protein G(I)/G(S)/G(O) subunit gamma-5B (68 aa).

The region spanning 3–68 is the G protein gamma domain; sequence GFSSVAATKK…FRPQKVCSFL (66 aa). Cys65 bears the Cysteine methyl ester mark. A lipid anchor (S-geranylgeranyl cysteine) is attached at Cys65. The propeptide at 66–68 is removed in mature form; it reads SFL.

The protein belongs to the G protein gamma family. G proteins are composed of 3 units; alpha, beta and gamma.

The protein resides in the cell membrane. In terms of biological role, guanine nucleotide-binding proteins (G proteins) are involved as a modulator or transducer in various transmembrane signaling systems. The beta and gamma chains are required for the GTPase activity, for replacement of GDP by GTP, and for G protein-effector interaction. The polypeptide is Guanine nucleotide-binding protein G(I)/G(S)/G(O) subunit gamma-5B (Homo sapiens (Human)).